We begin with the raw amino-acid sequence, 400 residues long: Methylthioribose kinase (400 aa).

ATP-binding positions include N40, K57, and 111–113 (EDL). D229 lines the substrate pocket. Position 246–248 (246–248 (DAE)) interacts with ATP. Residue R344 participates in substrate binding.

The protein belongs to the methylthioribose kinase family. As to quaternary structure, homodimer.

The catalysed reaction is 5-(methylsulfanyl)-D-ribose + ATP = 5-(methylsulfanyl)-alpha-D-ribose 1-phosphate + ADP + H(+). Its pathway is amino-acid biosynthesis; L-methionine biosynthesis via salvage pathway; S-methyl-5-thio-alpha-D-ribose 1-phosphate from S-methyl-5'-thioadenosine (hydrolase route): step 2/2. Its function is as follows. Catalyzes the phosphorylation of methylthioribose into methylthioribose-1-phosphate. This is Methylthioribose kinase from Pectobacterium carotovorum subsp. carotovorum (strain PC1).